A 417-amino-acid polypeptide reads, in one-letter code: Gamma-glutamyl phosphate reductase (417 aa).

Belongs to the gamma-glutamyl phosphate reductase family.

The protein localises to the cytoplasm. It carries out the reaction L-glutamate 5-semialdehyde + phosphate + NADP(+) = L-glutamyl 5-phosphate + NADPH + H(+). Its pathway is amino-acid biosynthesis; L-proline biosynthesis; L-glutamate 5-semialdehyde from L-glutamate: step 2/2. Catalyzes the NADPH-dependent reduction of L-glutamate 5-phosphate into L-glutamate 5-semialdehyde and phosphate. The product spontaneously undergoes cyclization to form 1-pyrroline-5-carboxylate. This chain is Gamma-glutamyl phosphate reductase, found in Escherichia coli (strain 55989 / EAEC).